We begin with the raw amino-acid sequence, 333 residues long: Glycerol-3-phosphate dehydrogenase [NAD(P)+] (333 aa).

NADPH contacts are provided by W13, K33, and K108. Residues K108 and G138 each coordinate sn-glycerol 3-phosphate. S142 is an NADPH binding site. Sn-glycerol 3-phosphate is bound by residues K193, D246, S256, R257, and N258. K193 serves as the catalytic Proton acceptor. Residue R257 coordinates NADPH. Residues V281 and E283 each contribute to the NADPH site.

The protein belongs to the NAD-dependent glycerol-3-phosphate dehydrogenase family.

It is found in the cytoplasm. It carries out the reaction sn-glycerol 3-phosphate + NAD(+) = dihydroxyacetone phosphate + NADH + H(+). It catalyses the reaction sn-glycerol 3-phosphate + NADP(+) = dihydroxyacetone phosphate + NADPH + H(+). It participates in membrane lipid metabolism; glycerophospholipid metabolism. In terms of biological role, catalyzes the reduction of the glycolytic intermediate dihydroxyacetone phosphate (DHAP) to sn-glycerol 3-phosphate (G3P), the key precursor for phospholipid synthesis. The sequence is that of Glycerol-3-phosphate dehydrogenase [NAD(P)+] from Bifidobacterium longum (strain NCC 2705).